The primary structure comprises 174 residues: Nucleoside-triphosphatase THEP1 (174 aa).

ATP contacts are provided by residues 7–14 (GRPGVGKT) and 94–101 (LIIIDEIG).

This sequence belongs to the THEP1 NTPase family.

The catalysed reaction is a ribonucleoside 5'-triphosphate + H2O = a ribonucleoside 5'-diphosphate + phosphate + H(+). In terms of biological role, has nucleotide phosphatase activity towards ATP, GTP, CTP, TTP and UTP. May hydrolyze nucleoside diphosphates with lower efficiency. This chain is Nucleoside-triphosphatase THEP1, found in Thermotoga sp. (strain RQ2).